Here is a 94-residue protein sequence, read N- to C-terminus: Cyclin-dependent kinases regulatory subunit (94 aa).

Belongs to the CKS family. Forms a homohexamer that can probably bind six kinase subunits. Interacts with cdk-1.

Its subcellular location is the nucleus. Functionally, binds to the catalytic subunit of the cyclin dependent kinases and is essential for their biological function. Has a role in the exit from M phase during early mitotic cell division. More specifically, thought to act by degrading B-type cyclins that causes breakdown of nuclear envelope and exit mitosis. This chain is Cyclin-dependent kinases regulatory subunit (cks-1), found in Caenorhabditis elegans.